Reading from the N-terminus, the 468-residue chain is 3-isopropylmalate dehydratase large subunit (468 aa).

3 residues coordinate [4Fe-4S] cluster: Cys-347, Cys-407, and Cys-410. Polar residues predominate over residues 424-441; that stretch reads SASSSNRNFKGRQGSPSG. Residues 424–443 form a disordered region; that stretch reads SASSSNRNFKGRQGSPSGRT.

It belongs to the aconitase/IPM isomerase family. LeuC type 1 subfamily. Heterodimer of LeuC and LeuD. The cofactor is [4Fe-4S] cluster.

The catalysed reaction is (2R,3S)-3-isopropylmalate = (2S)-2-isopropylmalate. The protein operates within amino-acid biosynthesis; L-leucine biosynthesis; L-leucine from 3-methyl-2-oxobutanoate: step 2/4. Functionally, catalyzes the isomerization between 2-isopropylmalate and 3-isopropylmalate, via the formation of 2-isopropylmaleate. This is 3-isopropylmalate dehydratase large subunit from Prochlorococcus marinus (strain MIT 9215).